The sequence spans 679 residues: Altered inheritance of mitochondria protein 21 (679 aa).

The interval 1-85 (MPSEVTPKVP…LQRPVRRSTT (85 aa)) is disordered. Positions 9–19 (VPERPSRRKTS) are enriched in basic and acidic residues. A Phosphothreonine modification is found at threonine 18. Serine 36 is subject to Phosphoserine. Threonine 58 carries the post-translational modification Phosphothreonine. Serine 70 bears the Phosphoserine mark. A Phosphothreonine modification is found at threonine 85. Serine 104 is modified (phosphoserine). The segment covering 110-119 (NIHNVSRKKS) has biased composition (basic residues). Disordered regions lie at residues 110–522 (NIHN…EKIE), 549–580 (IDTTPGEQAERALDEKSKSIPEEQREQSPNKM), and 593–679 (EKLP…FHSL). 2 stretches are compositionally biased toward polar residues: residues 133–149 (QNGQRSASDNKTSTNPS) and 164–178 (SAISPSNLVNKSNNE). Over residues 179–213 (VTEHSDSEDLTEKQKVHAALDNEAGDRSHFEEKLI) the composition is skewed to basic and acidic residues. Residues serine 183, serine 206, and serine 231 each carry the phosphoserine modification. Residues 243–272 (SDDKAEKFTKHPESSLEELQKHQEQQEEKI) are compositionally biased toward basic and acidic residues. At threonine 277 the chain carries Phosphothreonine. Position 284 is a phosphoserine (serine 284). The span at 296 to 323 (EVNSQPQGPSDTETVIAATSSNVPSQIA) shows a compositional bias: polar residues. Position 324 is a phosphoserine (serine 324). Composition is skewed to basic and acidic residues over residues 339–361 (KKDFEAHVQKEELPNTQEKRVSE) and 372–383 (EESKIPKIPSER). The interval 383–396 (RPKRRAPPPVPKKP) is interaction with SH3 domain of ABP1. Polar residues-rich tracts occupy residues 414-427 (DLHNNGNSSATTAS) and 437-452 (SSITSDTTKADFTSKL). Positions 471 to 482 (LEKKLSSPDTES) are enriched in basic and acidic residues. Positions 501 to 512 (RRGRGPRGRKLP) are enriched in basic residues. Residue threonine 552 is modified to Phosphothreonine. The span at 556-576 (QAERALDEKSKSIPEEQREQS) shows a compositional bias: basic and acidic residues. Serine 576 bears the Phosphoserine mark. A compositionally biased stretch (polar residues) spans 603–613 (PLSQLPQTNAV). Phosphoserine occurs at positions 620, 623, 625, 627, 667, 671, 675, and 678. Residues 667-679 (SALHSEEASFHSL) are compositionally biased toward basic and acidic residues.

This sequence belongs to the AIM21 family. As to quaternary structure, interacts with ribosomes. Interacts with ABP1.

Its subcellular location is the cytoplasm. It is found in the cytoskeleton. It localises to the actin patch. Functionally, involved in mitochondrial migration along actin filaments. This is Altered inheritance of mitochondria protein 21 (AIM21) from Saccharomyces cerevisiae (strain ATCC 204508 / S288c) (Baker's yeast).